Here is a 142-residue protein sequence, read N- to C-terminus: Small ribosomal subunit protein uS9 (142 aa).

Belongs to the universal ribosomal protein uS9 family. In terms of assembly, component of the small ribosomal subunit. Mature ribosomes consist of a small (40S) and a large (60S) subunit. The 40S subunit contains about 32 different proteins and 1 molecule of RNA (18S). The 60S subunit contains 45 different proteins and 3 molecules of RNA (25S, 5.8S and 5S).

It is found in the cytoplasm. Functionally, component of the ribosome, a large ribonucleoprotein complex responsible for the synthesis of proteins in the cell. The small ribosomal subunit (SSU) binds messenger RNAs (mRNAs) and translates the encoded message by selecting cognate aminoacyl-transfer RNA (tRNA) molecules. The large subunit (LSU) contains the ribosomal catalytic site termed the peptidyl transferase center (PTC), which catalyzes the formation of peptide bonds, thereby polymerizing the amino acids delivered by tRNAs into a polypeptide chain. The nascent polypeptides leave the ribosome through a tunnel in the LSU and interact with protein factors that function in enzymatic processing, targeting, and the membrane insertion of nascent chains at the exit of the ribosomal tunnel. The protein is Small ribosomal subunit protein uS9 (RPS16A) of Candida albicans (strain SC5314 / ATCC MYA-2876) (Yeast).